A 68-amino-acid chain; its full sequence is Protein BRICK1 (68 aa).

Residues 37–62 adopt a coiled-coil conformation; that stretch reads STRNKLSDLNEKLTILDRQVDYLEAT.

Belongs to the BRK1 family. In terms of assembly, part of a Scar/WAVE complex containing brk1, scrA, abiA, pirA and napA. Interacts with scrA.

Its subcellular location is the cytoplasm. It is found in the cytoskeleton. Involved in regulation of actin and microtubule organization. The sequence is that of Protein BRICK1 (brk1) from Dictyostelium discoideum (Social amoeba).